Here is a 239-residue protein sequence, read N- to C-terminus: MRPSGRKIDQMRKVSFERNFSKHAEGSCLVKFGDTHVLCTASLEEKTPPWLRNSGKGWVTAEYGMLPRATGERMKREAAAGKQGGRTQEIQRLIGRSLRAVVDLQALGERQITLDCDVIQADGGTRTASITGGWIALYDCLKWMESRNMIKVDRVLKDHVAAISCGVFASQPVIDLDYLEDSSAETDANFVMTGAGGIVEIQGTAEGTPFSEEEFTSLMGLAKNGIGELVALQKQAIAG.

Residues Arg-86 and 124–126 (GTR) each bind phosphate.

This sequence belongs to the RNase PH family. Homohexameric ring arranged as a trimer of dimers.

It catalyses the reaction tRNA(n+1) + phosphate = tRNA(n) + a ribonucleoside 5'-diphosphate. In terms of biological role, phosphorolytic 3'-5' exoribonuclease that plays an important role in tRNA 3'-end maturation. Removes nucleotide residues following the 3'-CCA terminus of tRNAs; can also add nucleotides to the ends of RNA molecules by using nucleoside diphosphates as substrates, but this may not be physiologically important. Probably plays a role in initiation of 16S rRNA degradation (leading to ribosome degradation) during starvation. The polypeptide is Ribonuclease PH (Rhizobium leguminosarum bv. trifolii (strain WSM2304)).